The chain runs to 270 residues: Formamidopyrimidine-DNA glycosylase (270 aa).

Pro2 acts as the Schiff-base intermediate with DNA in catalysis. Glu3 functions as the Proton donor in the catalytic mechanism. Residue Lys57 is the Proton donor; for beta-elimination activity of the active site. DNA contacts are provided by His90, Arg109, and Lys150. The FPG-type zinc-finger motif lies at 235–269 (LVYGNKDKPCPRCGTKIKSIIIGQRNSFFCPQCQK). Catalysis depends on Arg259, which acts as the Proton donor; for delta-elimination activity.

This sequence belongs to the FPG family. In terms of assembly, monomer. Requires Zn(2+) as cofactor.

The catalysed reaction is Hydrolysis of DNA containing ring-opened 7-methylguanine residues, releasing 2,6-diamino-4-hydroxy-5-(N-methyl)formamidopyrimidine.. It carries out the reaction 2'-deoxyribonucleotide-(2'-deoxyribose 5'-phosphate)-2'-deoxyribonucleotide-DNA = a 3'-end 2'-deoxyribonucleotide-(2,3-dehydro-2,3-deoxyribose 5'-phosphate)-DNA + a 5'-end 5'-phospho-2'-deoxyribonucleoside-DNA + H(+). Involved in base excision repair of DNA damaged by oxidation or by mutagenic agents. Acts as a DNA glycosylase that recognizes and removes damaged bases. Has a preference for oxidized purines, such as 7,8-dihydro-8-oxoguanine (8-oxoG). Has AP (apurinic/apyrimidinic) lyase activity and introduces nicks in the DNA strand. Cleaves the DNA backbone by beta-delta elimination to generate a single-strand break at the site of the removed base with both 3'- and 5'-phosphates. The chain is Formamidopyrimidine-DNA glycosylase from Histophilus somni (strain 2336) (Haemophilus somnus).